Here is a 381-residue protein sequence, read N- to C-terminus: Creatine kinase M-type (381 aa).

In terms of domain architecture, Phosphagen kinase N-terminal spans 11-98; sequence KLNYSAAEEF…FDPVIEDRHG (88 aa). The region spanning 125–367 is the Phosphagen kinase C-terminal domain; it reads YVLSSRVRTG…KLMVEMEKRL (243 aa). ATP is bound by residues 128-132, histidine 191, arginine 236, arginine 292, 320-325, and aspartate 335; these read SSRVR and RGTGGV.

It belongs to the ATP:guanido phosphotransferase family. In terms of assembly, dimer of identical or non-identical chains. With MM being the major form in skeletal muscle and myocardium, MB existing in myocardium, and BB existing in many tissues, especially brain.

It localises to the cytoplasm. The catalysed reaction is creatine + ATP = N-phosphocreatine + ADP + H(+). Functionally, reversibly catalyzes the transfer of phosphate between ATP and various phosphogens (e.g. creatine phosphate). Creatine kinase isoenzymes play a central role in energy transduction in tissues with large, fluctuating energy demands, such as skeletal muscle, heart, brain and spermatozoa. The chain is Creatine kinase M-type from Torpedo marmorata (Marbled electric ray).